A 1451-amino-acid polypeptide reads, in one-letter code: MVFNLENEKDKKVLALSNFLIDNNILDHNELNSLIERIESIYFNKYIEEKVFLFAITISRPLTIDIWNALYEGFNELNEGFKADNESFKLTITFKENEPFFKSKNSFSSVTIAIIKDYFHSFFSKDKKYKILIEQELSNPNFLSYENDELKAQCQTKELTEWLVQKSKSFIFWMNNAGFKNFNFIALYPIDKNESKLKVKAVTVSQYDKQFETKVFATEFIPIHKINQQIDDVKIIGQIFELKTHESLTGKKTLNIYVTDFQLGGSLILKWSYTDEKKIEGITIGNWIKAHIQVERDPNTQILYGIVREINPVEIPNNYKRLDLSKQKRVELVFHTKMTAFDGINDIEEYAQFAKERGWKAITVTDKDNIHIYPKFYEVAKKYDLKAIYGLEFNLTDDHIKIVHNPDNTKLSDATFVIFDIETTGLHGRYDDVIEFSARKIKNNSEIDHQQFFLKIDKPIPKTITEITKITDEMLEGGIDQQQGLEKIRNYLDDCVMVAHNGINFDLPFLQTQFEKYNIKPLTNPLIDTLCLSWALNPLFSSHTLSNICSKLKLEFDDERLHRAEYDTEALKKVFFYFKKQLKEMGINTLTEIDQNLNKKCQIDLMKRVFTNTAIVYVKNQRGFQNLYEMLSIALTDHNANRPLVLASSLAKFRKSFLLTENPVQGDIFKAALTKPINELEKAIEKVDFVLISQPNAYLGYTLREGLKKELINDAIKLVIKTATKLKKLVAVASDAYFIHPWENEYYKAIVCAKGLGGKWHRHFNNKEKEQTVPEVFLHTTDEMLKRMSFLGEDIAYKLVVENTNKIVKLLDLNELVPTKNKLYPPVMQDSNQKLIDKTWKQAEKRYGKNLPKLIKERIEKELNAIISNGFGIVFWISHLLVEQSVKDGYFVGPRGSIGSSLIANLIGISEINPLAAHYLCEQCHYFEVSDSVDDGYDLMIRDCPKCHEKASFKGDGHNIPFATFMGFSGDKIPDIDLNFSSEYQAKAHDYVRKLFGVNNTFRAGTIATVAEKTAYGYARNYFEIIKRVDLATTAEIERFKQKLIGIKRTTGQHPGGIMIFPSDHSVYEFTPCGFPADDVESEWKTTHFEYDALGDAILKLDILGQDDPTMLKHLADLTKINPQNIPHFDKNLISMFSSNKPLNLKPGIVDEVTGAVGIPEFGTKFVRKILEQTKPKDFADLIRVSGLSHGKNVWADNAQKLIKSNRLTLRDVIACRDDIMLYLINKGMQAKDAFEIMEKVRKGIKVNAKEVSLMQNCGVEQYWINACLKINYLFPKAHAAAYVLMAWRIAWFKLYHPLSYYACLLSFKLKEHDINGFEKGYEFIKNRLDELNKLYRIKKIKPKEAELLTSYEVYLEMMARNIKLQQISIQNSNARMFVEHNGVLIAPFITIPGMGEAVASSIVEARNEKPFASLNDFKKRTKITKKHVETMEQLQLFDEFEHQDDHKLFN.

An Exonuclease domain is found at 416–575 (FVIFDIETTG…YDTEALKKVF (160 aa)).

It belongs to the DNA polymerase type-C family. PolC subfamily.

The protein localises to the cytoplasm. It carries out the reaction DNA(n) + a 2'-deoxyribonucleoside 5'-triphosphate = DNA(n+1) + diphosphate. Its function is as follows. Required for replicative DNA synthesis. This DNA polymerase also exhibits 3' to 5' exonuclease activity. The polypeptide is DNA polymerase III PolC-type (Mycoplasma genitalium (strain ATCC 33530 / DSM 19775 / NCTC 10195 / G37) (Mycoplasmoides genitalium)).